The sequence spans 438 residues: Probable phosphoglucosamine mutase (438 aa).

The active-site Phosphoserine intermediate is the Ser91. Residues Ser91, Asp228, Asp230, and Asp232 each coordinate Mg(2+). Ser91 is modified (phosphoserine).

Belongs to the phosphohexose mutase family. It depends on Mg(2+) as a cofactor. Post-translationally, activated by phosphorylation.

It carries out the reaction alpha-D-glucosamine 1-phosphate = D-glucosamine 6-phosphate. Catalyzes the conversion of glucosamine-6-phosphate to glucosamine-1-phosphate. This chain is Probable phosphoglucosamine mutase, found in Methanocella arvoryzae (strain DSM 22066 / NBRC 105507 / MRE50).